The primary structure comprises 93 residues: Large ribosomal subunit protein bL36m (93 aa).

The transit peptide at 1–35 directs the protein to the mitochondrion; sequence MFLQTLRLTMPRMFLHMKPSPITITRACTVPSLLS.

It belongs to the bacterial ribosomal protein bL36 family. Component of the mitochondrial large ribosomal subunit (mt-LSU). Mature yeast 74S mitochondrial ribosomes consist of a small (37S) and a large (54S) subunit. The 37S small subunit contains a 15S ribosomal RNA (15S mt-rRNA) and 34 different proteins. The 54S large subunit contains a 21S rRNA (21S mt-rRNA) and 46 different proteins. bL36m has a zinc binding site.

Its subcellular location is the mitochondrion. Component of the mitochondrial ribosome (mitoribosome), a dedicated translation machinery responsible for the synthesis of mitochondrial genome-encoded proteins, including at least some of the essential transmembrane subunits of the mitochondrial respiratory chain. The mitoribosomes are attached to the mitochondrial inner membrane and translation products are cotranslationally integrated into the membrane. bL36m may be involved in a process influencing telomere capping. This Saccharomyces cerevisiae (strain ATCC 204508 / S288c) (Baker's yeast) protein is Large ribosomal subunit protein bL36m (RTC6).